A 336-amino-acid chain; its full sequence is UbiA prenyltransferase domain-containing protein 1 (336 aa).

Alanine 2 carries the post-translational modification N-acetylalanine. The next 8 membrane-spanning stretches (helical) occupy residues 81-101, 132-152, 158-178, 186-206, 207-227, 243-265, 275-295, and 313-333; these read LLLG…LVNT, FGVF…YLSA, LALI…GIGF, LVIL…VQVG, SLAI…EAIL, IVTL…LLFV, THCS…FSLE, and LNLL…AGSL.

The protein belongs to the UbiA prenyltransferase family. As to quaternary structure, interacts with HMGCR and SOAT1.

The protein resides in the endoplasmic reticulum membrane. It localises to the golgi apparatus membrane. The protein localises to the mitochondrion membrane. It catalyses the reaction menadiol + (2E,6E,10E)-geranylgeranyl diphosphate = menaquinol-4 + diphosphate. The enzyme catalyses all-trans-decaprenyl diphosphate + 4-hydroxybenzoate = 4-hydroxy-3-(all-trans-decaprenyl)benzoate + diphosphate. It functions in the pathway quinol/quinone metabolism; menaquinone biosynthesis. It participates in cofactor biosynthesis; ubiquinone biosynthesis. In terms of biological role, prenyltransferase that mediates the formation of menaquinone-4 (MK-4) and coenzyme Q10. MK-4 is a vitamin K2 isoform required for endothelial cell development. Mediates the conversion of phylloquinone (PK) into MK-4, probably by cleaving the side chain of phylloquinone (PK) to release 2-methyl-1,4-naphthoquinone (menadione; K3) and then prenylating it with geranylgeranyl pyrophosphate (GGPP) to form MK-4. Also plays a role in cardiovascular development independently of MK-4 biosynthesis, by acting as a coenzyme Q10 biosynthetic enzyme: coenzyme Q10, also named ubiquinone, plays an important antioxidant role in the cardiovascular system. Mediates biosynthesis of coenzyme Q10 in the Golgi membrane, leading to protect cardiovascular tissues from NOS3/eNOS-dependent oxidative stress. This is UbiA prenyltransferase domain-containing protein 1 (Ubiad1) from Mus musculus (Mouse).